Consider the following 216-residue polypeptide: ATP synthase subunit 5, mitochondrial (216 aa).

This sequence belongs to the ATPase delta chain family. F-type ATPases have 2 components, CF(1) - the catalytic core - and CF(0) - the membrane proton channel. CF(1) has five subunits: alpha(3), beta(3), gamma(1), delta(1), epsilon(1). CF(0) has three main subunits: a, b and c.

It is found in the mitochondrion. It localises to the mitochondrion inner membrane. Functionally, mitochondrial membrane ATP synthase (F(1)F(0) ATP synthase or Complex V) produces ATP from ADP in the presence of a proton gradient across the membrane which is generated by electron transport complexes of the respiratory chain. F-type ATPases consist of two structural domains, F(1) - containing the extramembraneous catalytic core and F(0) - containing the membrane proton channel, linked together by a central stalk and a peripheral stalk. During catalysis, ATP synthesis in the catalytic domain of F(1) is coupled via a rotary mechanism of the central stalk subunits to proton translocation. Part of the complex F(0) domain and the peripheric stalk, which acts as a stator to hold the catalytic alpha(3)beta(3) subcomplex and subunit a/ATP6 static relative to the rotary elements. The sequence is that of ATP synthase subunit 5, mitochondrial (atp5) from Schizosaccharomyces pombe (strain 972 / ATCC 24843) (Fission yeast).